The primary structure comprises 97 residues: Small ribosomal subunit protein bS20 (97 aa).

The protein belongs to the bacterial ribosomal protein bS20 family.

Functionally, binds directly to 16S ribosomal RNA. This is Small ribosomal subunit protein bS20 from Methylibium petroleiphilum (strain ATCC BAA-1232 / LMG 22953 / PM1).